A 106-amino-acid chain; its full sequence is Starvation responsive small protein A (106 aa).

Residues 15–32 (ILLVNAGLISAYGVRIIF) traverse the membrane as a helical segment.

The protein localises to the cell membrane. In terms of biological role, involved in starvation response and aggregation stage of the life cycle. May be involved in fruiting body morphogenesis and spore formation. The polypeptide is Starvation responsive small protein A (Dictyostelium discoideum (Social amoeba)).